A 430-amino-acid polypeptide reads, in one-letter code: GTPase Obg (430 aa).

The Obg domain occupies Met1–Leu158. The disordered stretch occupies residues Lys118–Pro145. The 171-residue stretch at Ala159–Glu329 folds into the OBG-type G domain. Residues Gly165 to Ser172, Phe190 to Lys194, Asp212 to Gly215, Asn282 to Asp285, and Ser310 to Ile312 each bind GTP. The Mg(2+) site is built by Ser172 and Thr192. Positions Lys352–Glu430 constitute an OCT domain.

This sequence belongs to the TRAFAC class OBG-HflX-like GTPase superfamily. OBG GTPase family. In terms of assembly, monomer. The cofactor is Mg(2+).

The protein localises to the cytoplasm. Its function is as follows. An essential GTPase which binds GTP, GDP and possibly (p)ppGpp with moderate affinity, with high nucleotide exchange rates and a fairly low GTP hydrolysis rate. Plays a role in control of the cell cycle, stress response, ribosome biogenesis and in those bacteria that undergo differentiation, in morphogenesis control. The sequence is that of GTPase Obg from Staphylococcus aureus (strain MRSA252).